A 2999-amino-acid polypeptide reads, in one-letter code: TPR and ankyrin repeat-containing protein 1 (2999 aa).

Residues 1 to 87 are disordered; sequence MASTTAGRRW…QPRGSTDSAC (87 aa). The span at 19-36 shows a compositional bias: low complexity; sequence RGPTPRSRAPGAKLSAPE. 2 TPR repeats span residues 144-177 and 179-211; these read AMLL…DPTY and KGYY…LQRS. ANK repeat units lie at residues 297-327, 328-361, 369-405, 538-567, 572-593, and 621-654; these read EKYV…NIET, IGPN…EWKE, AGCT…DPTL, SQDR…DPRS, EGDT…DIGF, and NGNT…NFNL. Disordered stretches follow at residues 684–722, 773–831, 1151–1211, and 1318–1344; these read RRKN…LPCG, MPLP…GASQ, LEVE…GCVP, and WEED…QTGD. 2 stretches are compositionally biased toward polar residues: residues 699–717 and 801–815; these read SRSS…TSFK and TQRM…NNPV. The span at 1151–1164 shows a compositional bias: basic and acidic residues; it reads LEVEPGKEGPGREE. Residues 1318 to 1327 are compositionally biased toward acidic residues; that stretch reads WEEDDEEVEA. TPR repeat units lie at residues 1772–1805 and 1866–1899; these read PYEW…EKEK and LGKI…DLAL.

In terms of tissue distribution, expressed only in the brain. Detected in the hippocampus, hypothalamus and cingulate gyrus.

The sequence is that of TPR and ankyrin repeat-containing protein 1 (Trank1) from Mus musculus (Mouse).